The chain runs to 945 residues: Xylanolytic transcriptional activator xlnR (945 aa).

Residues 1–23 (MSTPSIPQFTSSFSPFSSGSHST) are compositionally biased toward low complexity. Disordered regions lie at residues 1–32 (MSTP…QTVG) and 53–118 (AAGT…APVR). A compositionally biased stretch (basic and acidic residues) spans 73 to 84 (HTKDQPPFDNEK). The zn(2)-C6 fungal-type DNA-binding region spans 125–151 (CDQCNQLRTKCDGQHPCAHCIEFGLTC). 2 disordered regions span residues 172–210 (AAAA…GTYD) and 559–601 (PPNV…INVT). Residues 176–188 (TQGSNGHSGQANA) are compositionally biased toward polar residues. Over residues 565-581 (ARQDGERDGDGEADKRH) the composition is skewed to basic and acidic residues.

This sequence belongs to the xlnR/xlr1 family.

It localises to the nucleus. Transcriptional activator of the xylanolytic system. Involved in the regulation of extracellular cellulolytic and xylanolytic genes and in the regulation of the intracellular activities of D-xylose catabolic genes in the pentose catabolic pathway (PCP) in response to the presence of D-xylose. Binds to the DNA sequence 5'-GGNTAAA-3'. This chain is Xylanolytic transcriptional activator xlnR (xlnR), found in Aspergillus niger.